The sequence spans 265 residues: Tryptophan synthase alpha chain (265 aa).

Active-site proton acceptor residues include Glu-49 and Asp-60.

Belongs to the TrpA family. In terms of assembly, tetramer of two alpha and two beta chains.

It catalyses the reaction (1S,2R)-1-C-(indol-3-yl)glycerol 3-phosphate + L-serine = D-glyceraldehyde 3-phosphate + L-tryptophan + H2O. It participates in amino-acid biosynthesis; L-tryptophan biosynthesis; L-tryptophan from chorismate: step 5/5. Its function is as follows. The alpha subunit is responsible for the aldol cleavage of indoleglycerol phosphate to indole and glyceraldehyde 3-phosphate. This is Tryptophan synthase alpha chain from Cupriavidus metallidurans (strain ATCC 43123 / DSM 2839 / NBRC 102507 / CH34) (Ralstonia metallidurans).